We begin with the raw amino-acid sequence, 892 residues long: Alpha-actinin-1 (892 aa).

Met1 bears the N-acetylmethionine mark. Positions 1 to 247 are actin-binding; sequence MDHYDSQQTN…IMTYVSSFYH (247 aa). Ser6 is subject to Phosphoserine. The residue at position 12 (Tyr12) is a Phosphotyrosine; by FAK1. Calponin-homology (CH) domains lie at 31-135 and 144-250; these read KQQR…LRFA and TSAK…HAFS. N6-acetyllysine occurs at positions 95 and 195. Spectrin repeat units follow at residues 274-384, 394-499, 509-620, and 630-733; these read QLME…WLLN, HLAE…ALER, QLYL…ALTE, and RLRK…EVEN. Positions 274–733 are interaction with DDN; the sequence is QLMEDYEKLA…IARTINEVEN (460 aa). At Ser471 the chain carries Phosphoserine. Lys676 is modified (N6-acetyllysine). Ser677 carries the post-translational modification Phosphoserine. EF-hand domains lie at 746–781 and 787–822; these read EQMNEFRASFNHFDRDHSGTLGPEEFKACLISLGYD and QGEAEFARIMSIVDPNRLGVVTFQAFIDFMSRETAD. Residues Asp759, Asp761, Ser763, Thr765, and Glu770 each coordinate Ca(2+). Position 890 is a phosphoserine (Ser890).

The protein belongs to the alpha-actinin family. As to quaternary structure, homodimer; antiparallel. Interacts with MYOZ2, TTID and LPP. Interacts with DDN. Interacts with PSD. Interacts with MICALL2. Interacts with DNM2 and CTTN. Interacts with PDLIM1. Interacts with PDLIM2. Interacts with PDLIM4 (via PDZ domain). Interacts with IGSF8.

Its subcellular location is the cytoplasm. It is found in the cytoskeleton. It localises to the myofibril. The protein resides in the sarcomere. The protein localises to the z line. Its subcellular location is the cell membrane. It is found in the cell junction. It localises to the cell projection. The protein resides in the ruffle. Its function is as follows. F-actin cross-linking protein which is thought to anchor actin to a variety of intracellular structures. Association with IGSF8 regulates the immune synapse formation and is required for efficient T-cell activation. The polypeptide is Alpha-actinin-1 (ACTN1) (Homo sapiens (Human)).